Consider the following 478-residue polypeptide: DNA gyrase subunit B (478 aa).

One can recognise a Toprim domain in the interval 319–438; that stretch reads CEIYLVEGDS…GGHVYIAQPP (120 aa). Positions 325, 403, and 405 each coordinate Mg(2+).

The protein belongs to the type II topoisomerase GyrB family. In terms of assembly, heterotetramer, composed of two GyrA and two GyrB chains. In the heterotetramer, GyrA contains the active site tyrosine that forms a transient covalent intermediate with DNA, while GyrB binds cofactors and catalyzes ATP hydrolysis. Mg(2+) serves as cofactor. The cofactor is Mn(2+). Requires Ca(2+) as cofactor.

Its subcellular location is the cytoplasm. It carries out the reaction ATP-dependent breakage, passage and rejoining of double-stranded DNA.. Functionally, a type II topoisomerase that negatively supercoils closed circular double-stranded (ds) DNA in an ATP-dependent manner to modulate DNA topology and maintain chromosomes in an underwound state. Negative supercoiling favors strand separation, and DNA replication, transcription, recombination and repair, all of which involve strand separation. Also able to catalyze the interconversion of other topological isomers of dsDNA rings, including catenanes and knotted rings. Type II topoisomerases break and join 2 DNA strands simultaneously in an ATP-dependent manner. The chain is DNA gyrase subunit B (gyrB) from Cytophaga aurantiaca.